The primary structure comprises 197 residues: dITP/XTP pyrophosphatase (197 aa).

Position 8-13 (8-13 (TGNPGK)) interacts with substrate. Mg(2+) is bound by residues glutamate 40 and aspartate 69. Aspartate 69 functions as the Proton acceptor in the catalytic mechanism. Substrate is bound by residues serine 70, 154–157 (FGYD), lysine 177, and 182–183 (HR).

This sequence belongs to the HAM1 NTPase family. In terms of assembly, homodimer. Requires Mg(2+) as cofactor.

It catalyses the reaction XTP + H2O = XMP + diphosphate + H(+). It carries out the reaction dITP + H2O = dIMP + diphosphate + H(+). The catalysed reaction is ITP + H2O = IMP + diphosphate + H(+). Functionally, pyrophosphatase that catalyzes the hydrolysis of nucleoside triphosphates to their monophosphate derivatives, with a high preference for the non-canonical purine nucleotides XTP (xanthosine triphosphate), dITP (deoxyinosine triphosphate) and ITP. Seems to function as a house-cleaning enzyme that removes non-canonical purine nucleotides from the nucleotide pool, thus preventing their incorporation into DNA/RNA and avoiding chromosomal lesions. This is dITP/XTP pyrophosphatase from Yersinia pestis.